A 271-amino-acid polypeptide reads, in one-letter code: Aquaporin-2 (271 aa).

Topologically, residues 1–11 (MWELRSIAFSR) are cytoplasmic. A helical membrane pass occupies residues 12 to 32 (AVLAEFLATLLFVFFGLGSAL). The Extracellular portion of the chain corresponds to 33-40 (NWPQALPS). Residues 41–59 (VLQIAMAFGLAIGTLVQAL) traverse the membrane as a helical segment. Over 60 to 64 (GHVSG) the chain is Cytoplasmic. Residues 65–74 (AHINPAVTVA) constitute an intramembrane region (discontinuously helical). An NPA 1 motif is present at residues 68–70 (NPA). Over 75-85 (CLVGCHVSFLR) the chain is Cytoplasmic. Residues 86–107 (AVFYVAAQLLGAVAGAALLHEI) traverse the membrane as a helical segment. The Extracellular segment spans residues 108 to 127 (TPPAIRGDLAVNALNNNSTA). Residue Asn-123 is glycosylated (N-linked (GlcNAc...) asparagine). The helical transmembrane segment at 128–148 (GQAVTVELFLTLQLVLCIFAS) threads the bilayer. The Cytoplasmic segment spans residues 149–156 (TDERRGDN). A helical transmembrane segment spans residues 157 to 176 (VGTPALSIGFSVALGHLLGI). The Extracellular portion of the chain corresponds to 177–180 (HYTG). Positions 181-193 (CSMNPARSLAPAI) form an intramembrane region, discontinuously helical. The NPA 2 signature appears at 184–186 (NPA). Over 194–201 (VTGKFDDH) the chain is Extracellular. A helical membrane pass occupies residues 202-222 (WVFWIGPLVGAIVASLLYNYV). The Cytoplasmic segment spans residues 223–271 (LFPPAKSLSERLAVLKGLEPDTDWEEREVRRRQSVELHSPQSLPRGSKA). The disordered stretch occupies residues 251-271 (VRRRQSVELHSPQSLPRGSKA). Ser-256 carries the phosphoserine modification. Residues 261–271 (SPQSLPRGSKA) are compositionally biased toward polar residues.

The protein belongs to the MIP/aquaporin (TC 1.A.8) family. In terms of assembly, homotetramer. Post-translationally, ser-256 phosphorylation is necessary and sufficient for expression at the apical membrane. Endocytosis is not phosphorylation-dependent. In terms of processing, N-glycosylated.

It is found in the apical cell membrane. The protein localises to the basolateral cell membrane. It localises to the cell membrane. Its subcellular location is the cytoplasmic vesicle membrane. The protein resides in the golgi apparatus. It is found in the trans-Golgi network membrane. It carries out the reaction H2O(in) = H2O(out). It catalyses the reaction glycerol(in) = glycerol(out). In terms of biological role, forms a water-specific channel that provides the plasma membranes of renal collecting duct with high permeability to water, thereby permitting water to move in the direction of an osmotic gradient. Could also be permeable to glycerol. The chain is Aquaporin-2 from Bos taurus (Bovine).